The primary structure comprises 674 residues: Xaa-Pro aminopeptidase 2 (674 aa).

Positions 1 to 22 are cleaved as a signal peptide; that stretch reads MAQAYWQCYPWLVLLCACAWSY. Residue N65 is glycosylated (N-linked (GlcNAc...) asparagine). R116 contributes to the substrate binding site. Residues N278 and N293 are each glycosylated (N-linked (GlcNAc...) asparagine). H430 is a binding site for substrate. Residues D450, D461, and H524 each coordinate Zn(2+). Residues H524, H533, and E555 each coordinate substrate. Residues E555 and E569 each coordinate Zn(2+). A650 carries GPI-anchor amidated alanine lipidation. A propeptide spans 651–674 (removed in mature form); sequence SAPHTTSLASMWVASALAILSWSC.

The protein belongs to the peptidase M24B family. In terms of assembly, homotrimer. Zn(2+) is required as a cofactor. In terms of processing, N-glycosylated. In terms of tissue distribution, expressed strongly in lung, liver and heart, and at lower levels in kidney, testis, brain, spleen and skeletal muscle.

The protein localises to the cell membrane. It catalyses the reaction Release of any N-terminal amino acid, including proline, that is linked to proline, even from a dipeptide or tripeptide.. With respect to regulation, inhibited by the chelating agents 1,10-phenanthroline and EDTA. Inhibited by the thiol-containing compounds 2-mercaptoethanol and dithiothreitol. Also inhibited by apstatin, captopril and p-(ch1oromercuri)benzenesulfonic acid. Weakly inhibited by D,L-2-mercaptomethyl-3-guanidinoethylthiopropanoic acid and N-[l-(R,S)-carboxy-(2-phenylethyl)]-Ala-Ala-Phe-p-aminobenzoate. Inhibited by ramiprilat and enalaprilat, in a Mn(2+)-dependent manner. Metal ions have a complex substrate- and concentration-dependent effect on activity. Activity towards Arg-Pro-Pro and Gly-Pro-Hyp is stimulated by Mn(2+) ion concentrations of 10-100 uM and then inhibited at Mn(2+) concentrations of 1-2 mM. Mn(2+) concentrations in excess of 2 mM stimulate activity towards Gly-Pro-Hyp but inhibit activity towards Arg-Pro-Pro. Zn(2+) and Co(2+) ions also inhibit activity towards Arg-Pro-Pro at high concentrations. Activity towards bradykinin is inhibited by Mn(2+) concentrations in excess of 1 mM. Membrane-bound metalloprotease which catalyzes the removal of a penultimate prolyl residue from the N-termini of peptides, such as Arg-Pro-Pro. May play a role in the metabolism of the vasodilator bradykinin. The protein is Xaa-Pro aminopeptidase 2 of Rattus norvegicus (Rat).